Reading from the N-terminus, the 271-residue chain is Small ribosomal subunit protein uS3 (271 aa).

In terms of domain architecture, KH type-2 spans 40–108 (IRKFLKKRLY…TIIVNIVEVR (69 aa)). Residues 210–271 (PTRDGVNPRE…RPQRTENKGN (62 aa)) are disordered. Residues 215-247 (VNPREESRKSDRRDNKRDNRRNDRRGNDRRGND) are compositionally biased toward basic and acidic residues.

It belongs to the universal ribosomal protein uS3 family. Part of the 30S ribosomal subunit. Forms a tight complex with proteins S10 and S14.

Functionally, binds the lower part of the 30S subunit head. Binds mRNA in the 70S ribosome, positioning it for translation. The polypeptide is Small ribosomal subunit protein uS3 (Clostridioides difficile (strain 630) (Peptoclostridium difficile)).